Reading from the N-terminus, the 371-residue chain is Cuticle collagen 71 (371 aa).

A helical transmembrane segment spans residues 38–60; sequence GYAAVTFSTVSVICFCVTMPVVF. Disordered stretches follow at residues 108 to 127 and 153 to 371; these read AGYD…GGDA and EGPH…GTRR. Positions 174 to 186 are enriched in pro residues; the sequence is PGPPGPPGPPGRP. Over residues 188–201 the composition is skewed to low complexity; sequence PNGKAGANGLNGNP. Positions 202–222 are enriched in pro residues; the sequence is GRPPEAPCEPVTPPPCPPCPA. A compositionally biased stretch (low complexity) spans 223–240; sequence GPKGAPGQAGYPGADGQP. In terms of domain architecture, Collagen-like spans 223–280; that stretch reads GPKGAPGQAGYPGADGQPGSQGDNGEKGSDGAAGEKGRPGPLGKIGEPGATGETGENA. Residues 246 to 260 show a composition bias toward basic and acidic residues; it reads NGEKGSDGAAGEKGR. Low complexity predominate over residues 314–323; it reads AGAPGAPGEN. Positions 340–349 are enriched in basic and acidic residues; it reads HDGKAGRAGE.

This sequence belongs to the cuticular collagen family. Collagen polypeptide chains are complexed within the cuticle by disulfide bonds and other types of covalent cross-links.

Its subcellular location is the membrane. It is found in the nucleus. Functionally, probable cuticular collagen-like protein. Nematode cuticles are composed largely of collagen-like proteins. The cuticle functions both as an exoskeleton and as a barrier to protect the worm from its environment. Acts downstream of the Wnt signaling pathway, perhaps in the formation of the adult cuticle. The chain is Cuticle collagen 71 from Caenorhabditis elegans.